Reading from the N-terminus, the 473-residue chain is Probable cytosolic iron-sulfur protein assembly protein 1 (473 aa).

Residues 1-25 (MPSSTPGGSLKHLSDLTPPSQDRTW) are disordered. 2 WD repeats span residues 11 to 58 (KHLS…LLST) and 62 to 104 (GHKR…GRAE). The interval 112-133 (GGLAEADRQEGDDTDGDEEDED) is disordered. Over residues 123-133 (DDTDGDEEDED) the composition is skewed to acidic residues. 4 WD repeats span residues 144 to 183 (GHDS…DNNF), 191 to 230 (EHSG…WGQV), 235 to 313 (GHEG…KPPP), and 341 to 380 (MHDL…KPPV). The disordered stretch occupies residues 377 to 405 (KPPVHTTSEQDKPDSARETQKANGERTAP). Residues 384 to 400 (SEQDKPDSARETQKANG) show a composition bias toward basic and acidic residues. The WD 7 repeat unit spans residues 438-473 (SQQQNFDNSEMDHANEEEVLLSTGDDGVVRVWTLER).

Belongs to the WD repeat CIA1 family.

In terms of biological role, essential component of the cytosolic iron-sulfur (Fe/S) protein assembly machinery. Required for the maturation of extramitochondrial Fe/S proteins. This Coccidioides immitis (strain RS) (Valley fever fungus) protein is Probable cytosolic iron-sulfur protein assembly protein 1.